A 409-amino-acid polypeptide reads, in one-letter code: Nucleoprotein (409 aa).

Disordered regions lie at residues 1-64 and 167-197; these read MSAG…SNVK and RNSS…VDDD. The interval 30-161 is RNA-binding; the sequence is GTGQASWFQS…NNYRWDFIAL (132 aa). Residues 32-157 enclose the CoV N NTD domain; the sequence is GQASWFQSLK…GGPDNNYRWD (126 aa). Over residues 176–197 the composition is skewed to basic and acidic residues; that stretch reads ENSRPGSRDSSRGRQRSRVDDD. S192 is modified (phosphoserine; by host). Positions 217–333 constitute a CoV N CTD domain; it reads SKQKANEMAE…ECVDGVGTRP (117 aa). The tract at residues 228–335 is dimerization; it reads KYHKRAIAPG…VDGVGTRPKD (108 aa). A disulfide bridge links C322 with C325. The tract at residues 327 to 409 is disordered; that stretch reads DGVGTRPKDD…GEGAFDDINI (83 aa). A compositionally biased stretch (basic and acidic residues) spans 332 to 349; that stretch reads RPKDDPTPRSRAASKDRN. T374 bears the Phosphothreonine; by host mark.

This sequence belongs to the gammacoronavirus nucleocapsid protein family. In terms of assembly, homooligomer. Both monomeric and oligomeric forms interact with RNA. Interacts with protein M. Interacts with NSP3; this interaction serves to tether the genome to the newly translated replicase-transcriptase complex at a very early stage of infection. Post-translationally, ADP-ribosylated. The ADP-ribosylation is retained in the virion during infection. In terms of processing, phosphorylated on serine and threonine residues.

It localises to the virion. It is found in the host endoplasmic reticulum-Golgi intermediate compartment. Its subcellular location is the host Golgi apparatus. In terms of biological role, packages the positive strand viral genome RNA into a helical ribonucleocapsid (RNP) and plays a fundamental role during virion assembly through its interactions with the viral genome and membrane protein M. Plays an important role in enhancing the efficiency of subgenomic viral RNA transcription as well as viral replication. The sequence is that of Nucleoprotein from Gallus gallus (Chicken).